The chain runs to 171 residues: Shikimate kinase (171 aa).

Gly-14–Thr-19 serves as a coordination point for ATP. Ser-18 provides a ligand contact to Mg(2+). 3 residues coordinate substrate: Asp-36, Arg-60, and Gly-82. Residue Arg-120 coordinates ATP. Arg-139 is a binding site for substrate. Gln-156 contributes to the ATP binding site.

The protein belongs to the shikimate kinase family. Monomer. Requires Mg(2+) as cofactor.

The protein localises to the cytoplasm. It catalyses the reaction shikimate + ATP = 3-phosphoshikimate + ADP + H(+). The protein operates within metabolic intermediate biosynthesis; chorismate biosynthesis; chorismate from D-erythrose 4-phosphate and phosphoenolpyruvate: step 5/7. Its function is as follows. Catalyzes the specific phosphorylation of the 3-hydroxyl group of shikimic acid using ATP as a cosubstrate. The chain is Shikimate kinase from Psychromonas ingrahamii (strain DSM 17664 / CCUG 51855 / 37).